A 333-amino-acid polypeptide reads, in one-letter code: Ketol-acid reductoisomerase (NADP(+)) (333 aa).

In terms of domain architecture, KARI N-terminal Rossmann spans 1 to 179; sequence MFYDDDADLS…GGTRAGVIKT (179 aa). NADP(+)-binding positions include 22 to 25, K45, S48, S50, and 80 to 83; these read YGSQ and DTAQ. H105 is an active-site residue. Position 131 (G131) interacts with NADP(+). The region spanning 180-325 is the KARI C-terminal knotted domain; sequence TFKDETETDL…KKLRDLMSWV (146 aa). Mg(2+)-binding residues include D188, E192, E224, and E228. S249 is a binding site for substrate.

It belongs to the ketol-acid reductoisomerase family. It depends on Mg(2+) as a cofactor.

It carries out the reaction (2R)-2,3-dihydroxy-3-methylbutanoate + NADP(+) = (2S)-2-acetolactate + NADPH + H(+). It catalyses the reaction (2R,3R)-2,3-dihydroxy-3-methylpentanoate + NADP(+) = (S)-2-ethyl-2-hydroxy-3-oxobutanoate + NADPH + H(+). The protein operates within amino-acid biosynthesis; L-isoleucine biosynthesis; L-isoleucine from 2-oxobutanoate: step 2/4. It functions in the pathway amino-acid biosynthesis; L-valine biosynthesis; L-valine from pyruvate: step 2/4. Its function is as follows. Involved in the biosynthesis of branched-chain amino acids (BCAA). Catalyzes an alkyl-migration followed by a ketol-acid reduction of (S)-2-acetolactate (S2AL) to yield (R)-2,3-dihydroxy-isovalerate. In the isomerase reaction, S2AL is rearranged via a Mg-dependent methyl migration to produce 3-hydroxy-3-methyl-2-ketobutyrate (HMKB). In the reductase reaction, this 2-ketoacid undergoes a metal-dependent reduction by NADPH to yield (R)-2,3-dihydroxy-isovalerate. The polypeptide is Ketol-acid reductoisomerase (NADP(+)) (Mycobacterium bovis (strain ATCC BAA-935 / AF2122/97)).